The sequence spans 121 residues: Cu-Zn superoxide dismutase-like protein (121 aa).

Cysteines 48 and 98 form a disulfide.

Belongs to the Cu-Zn superoxide dismutase family.

It is found in the host cytoplasm. Its function is as follows. Virion protein with no enzymatic activity. This chain is Cu-Zn superoxide dismutase-like protein, found in Vaccinia virus (strain Ankara) (VACV).